The sequence spans 408 residues: Imidazolonepropionase (408 aa).

The Fe(3+) site is built by histidine 73 and histidine 75. Zn(2+) is bound by residues histidine 73 and histidine 75. 4-imidazolone-5-propanoate is bound by residues arginine 82, tyrosine 145, and histidine 178. Tyrosine 145 is an N-formimidoyl-L-glutamate binding site. Histidine 243 is a binding site for Fe(3+). Residue histidine 243 coordinates Zn(2+). Glutamine 246 contacts 4-imidazolone-5-propanoate. Aspartate 318 is a Fe(3+) binding site. Zn(2+) is bound at residue aspartate 318. Residues asparagine 320 and glycine 322 each contribute to the N-formimidoyl-L-glutamate site. Serine 323 provides a ligand contact to 4-imidazolone-5-propanoate.

It belongs to the metallo-dependent hydrolases superfamily. HutI family. Requires Zn(2+) as cofactor. It depends on Fe(3+) as a cofactor.

The protein resides in the cytoplasm. It catalyses the reaction 4-imidazolone-5-propanoate + H2O = N-formimidoyl-L-glutamate. The protein operates within amino-acid degradation; L-histidine degradation into L-glutamate; N-formimidoyl-L-glutamate from L-histidine: step 3/3. Functionally, catalyzes the hydrolytic cleavage of the carbon-nitrogen bond in imidazolone-5-propanoate to yield N-formimidoyl-L-glutamate. It is the third step in the universal histidine degradation pathway. The sequence is that of Imidazolonepropionase from Shewanella woodyi (strain ATCC 51908 / MS32).